The chain runs to 327 residues: AA9 family lytic polysaccharide monooxygenase B (327 aa).

A signal peptide spans 1–19 (MKSFTATALAALLAQQAAA). His20 and His98 together coordinate Cu(2+). A disulfide bond links Cys68 and Cys192. O2 is bound by residues His178 and Gln187. Cu(2+) is bound at residue Tyr189. Over residues 264 to 280 (SPTTSLTPPVSTSTPAP) the composition is skewed to low complexity. The disordered stretch occupies residues 264–284 (SPTTSLTPPVSTSTPAPGNGG). The CBM1 domain maps to 291–327 (CTVQKYGQCGGQGYTGCTTCAAGSTCNTTNQWYHQCV). Asn317 carries an N-linked (GlcNAc...) asparagine glycan.

Belongs to the polysaccharide monooxygenase AA9 family. Cu(2+) is required as a cofactor.

It localises to the secreted. It carries out the reaction [(1-&gt;4)-beta-D-glucosyl]n+m + reduced acceptor + O2 = 4-dehydro-beta-D-glucosyl-[(1-&gt;4)-beta-D-glucosyl]n-1 + [(1-&gt;4)-beta-D-glucosyl]m + acceptor + H2O.. In terms of biological role, lytic polysaccharide monooxygenase (LPMO) that depolymerizes crystalline and amorphous polysaccharides via the oxidation of scissile alpha- or beta-(1-4)-glycosidic bonds, yielding C1 or C4 oxidation products. Catalysis by LPMOs requires the reduction of the active-site copper from Cu(II) to Cu(I) by a reducing agent and H(2)O(2) or O(2) as a cosubstrate. The chain is AA9 family lytic polysaccharide monooxygenase B (LPMO9B) from Podospora anserina (strain S / ATCC MYA-4624 / DSM 980 / FGSC 10383) (Pleurage anserina).